We begin with the raw amino-acid sequence, 220 residues long: N-(5'-phosphoribosyl)anthranilate isomerase (220 aa).

The protein belongs to the TrpF family.

The catalysed reaction is N-(5-phospho-beta-D-ribosyl)anthranilate = 1-(2-carboxyphenylamino)-1-deoxy-D-ribulose 5-phosphate. It participates in amino-acid biosynthesis; L-tryptophan biosynthesis; L-tryptophan from chorismate: step 3/5. This Xylella fastidiosa (strain 9a5c) protein is N-(5'-phosphoribosyl)anthranilate isomerase.